The sequence spans 389 residues: tRNA (guanine-N(7)-)-methyltransferase non-catalytic subunit TRM82 (389 aa).

WD repeat units lie at residues Gln44–Lys86, Gly134–Leu179, and Gln184–Glu222.

This sequence belongs to the WD repeat TRM82 family. As to quaternary structure, forms a heterodimer with the catalytic subunit TRM8.

The protein localises to the nucleus. Its pathway is tRNA modification; N(7)-methylguanine-tRNA biosynthesis. Functionally, required for the formation of N(7)-methylguanine at position 46 (m7G46) in tRNA. In the complex, it is required to stabilize and induce conformational changes of the catalytic subunit. In Lodderomyces elongisporus (strain ATCC 11503 / CBS 2605 / JCM 1781 / NBRC 1676 / NRRL YB-4239) (Yeast), this protein is tRNA (guanine-N(7)-)-methyltransferase non-catalytic subunit TRM82.